The sequence spans 223 residues: Deoxyribose-phosphate aldolase (223 aa).

The active-site Proton donor/acceptor is Asp-91. Lys-153 functions as the Schiff-base intermediate with acetaldehyde in the catalytic mechanism. Lys-182 serves as the catalytic Proton donor/acceptor.

This sequence belongs to the DeoC/FbaB aldolase family. DeoC type 1 subfamily.

It is found in the cytoplasm. The enzyme catalyses 2-deoxy-D-ribose 5-phosphate = D-glyceraldehyde 3-phosphate + acetaldehyde. It functions in the pathway carbohydrate degradation; 2-deoxy-D-ribose 1-phosphate degradation; D-glyceraldehyde 3-phosphate and acetaldehyde from 2-deoxy-alpha-D-ribose 1-phosphate: step 2/2. Functionally, catalyzes a reversible aldol reaction between acetaldehyde and D-glyceraldehyde 3-phosphate to generate 2-deoxy-D-ribose 5-phosphate. In Streptococcus pyogenes serotype M28 (strain MGAS6180), this protein is Deoxyribose-phosphate aldolase.